We begin with the raw amino-acid sequence, 283 residues long: Shikimate dehydrogenase (NADP(+)) (283 aa).

Shikimate is bound by residues serine 16–serine 18 and threonine 63. Residue lysine 67 is the Proton acceptor of the active site. Aspartate 79 provides a ligand contact to NADP(+). Asparagine 88 and aspartate 103 together coordinate shikimate. NADP(+)-binding positions include glycine 128–alanine 132, alanine 223, and glycine 243.

Belongs to the shikimate dehydrogenase family. As to quaternary structure, homodimer.

The catalysed reaction is shikimate + NADP(+) = 3-dehydroshikimate + NADPH + H(+). It functions in the pathway metabolic intermediate biosynthesis; chorismate biosynthesis; chorismate from D-erythrose 4-phosphate and phosphoenolpyruvate: step 4/7. Involved in the biosynthesis of the chorismate, which leads to the biosynthesis of aromatic amino acids. Catalyzes the reversible NADPH linked reduction of 3-dehydroshikimate (DHSA) to yield shikimate (SA). The sequence is that of Shikimate dehydrogenase (NADP(+)) from Xanthomonas oryzae pv. oryzae (strain MAFF 311018).